We begin with the raw amino-acid sequence, 270 residues long: Regulatory protein RecX (270 aa).

It belongs to the RecX family.

It is found in the cytoplasm. Functionally, modulates RecA activity. The protein is Regulatory protein RecX of Bacillus cereus (strain AH187).